Consider the following 541-residue polypeptide: NAD(P)H-quinone oxidoreductase subunit 2 A, chloroplastic (541 aa).

The next 14 membrane-spanning stretches (helical) occupy residues 24-44, 57-77, 99-119, 124-144, 149-169, 183-203, 227-247, 289-309, 326-346, 354-374, 385-405, 426-446, 449-469, and 515-535; these read LLLFDGSLIFPECILIFGLIL, IPWLYFIPSTSLVMSITALLF, IFQFLILLCSTLCIPLSVEYI, MAITEFLLFVLTATLGGMFLC, FITIFVAPECFSLCSYLLSGY, YLLMGGASSSILVHGFSWLYG, PGISIALIFITVGIGFKLSPA, ILSPTPVVAFLSVTSKVAASA, WHLLLEILAILSMILGNLIAI, MLAYSSIGQIGYVIIGIIVGD, YMLFYISMNLGTFACIVLFGL, ALSLALCLLSLGGLPPLAGFF, LYLFWCGWQAGLYFLVLIGLL, and MIVCVIASTIPGISMNPIIAI.

The protein belongs to the complex I subunit 2 family. As to quaternary structure, NDH is composed of at least 16 different subunits, 5 of which are encoded in the nucleus.

It is found in the plastid. The protein resides in the chloroplast thylakoid membrane. It catalyses the reaction a plastoquinone + NADH + (n+1) H(+)(in) = a plastoquinol + NAD(+) + n H(+)(out). It carries out the reaction a plastoquinone + NADPH + (n+1) H(+)(in) = a plastoquinol + NADP(+) + n H(+)(out). NDH shuttles electrons from NAD(P)H:plastoquinone, via FMN and iron-sulfur (Fe-S) centers, to quinones in the photosynthetic chain and possibly in a chloroplast respiratory chain. The immediate electron acceptor for the enzyme in this species is believed to be plastoquinone. Couples the redox reaction to proton translocation, and thus conserves the redox energy in a proton gradient. This is NAD(P)H-quinone oxidoreductase subunit 2 A, chloroplastic from Coffea arabica (Arabian coffee).